A 313-amino-acid chain; its full sequence is tRNA dimethylallyltransferase (313 aa).

An ATP-binding site is contributed by 11–18; the sequence is GPTACGKT. 13-18 contributes to the substrate binding site; sequence TACGKT. 3 interaction with substrate tRNA regions span residues 36–39, 160–164, and 243–248; these read DSAL, QRIGR, and RCVGYR.

The protein belongs to the IPP transferase family. As to quaternary structure, monomer. Mg(2+) serves as cofactor.

The enzyme catalyses adenosine(37) in tRNA + dimethylallyl diphosphate = N(6)-dimethylallyladenosine(37) in tRNA + diphosphate. In terms of biological role, catalyzes the transfer of a dimethylallyl group onto the adenine at position 37 in tRNAs that read codons beginning with uridine, leading to the formation of N6-(dimethylallyl)adenosine (i(6)A). The chain is tRNA dimethylallyltransferase from Neisseria gonorrhoeae (strain NCCP11945).